Consider the following 544-residue polypeptide: Epidermal growth factor-like protein 6 (544 aa).

A signal peptide spans 1–30 (MAITGGMQSSDMVLLLWITVICACCSFVDS). The 36-residue stretch at 63–98 (RKGQCEAVCEQGCKHGECVGPNKCKCFPGFTGKNCN) folds into the EGF-like 1 domain. Intrachain disulfides connect Cys67–Cys80, Cys71–Cys86, Cys88–Cys97, Cys104–Cys115, Cys111–Cys124, and Cys126–Cys138. Positions 100–139 (DLNECGLKPRPCEHRCMNTHGSYKCYCLNGYMLMPDGSCS) constitute an EGF-like 2; calcium-binding domain. Residues 144–178 (CAMANCQYGCEQVKGDIRCLCPSGGLQLGPDGRTC) enclose the EGF-like 3 domain. The EGF-like 4; calcium-binding domain occupies 180–218 (DIDECAVGKASCPINRRCVNTFGSYYCKCQIGYELKYVN). Disulfide bonds link Cys184–Cys197, Cys191–Cys206, Cys229–Cys242, Cys236–Cys251, and Cys253–Cys264. The region spanning 225-265 (DINECLLNTHKCSINADCLNTQGSFKCRCKHGFKGNGQECS) is the EGF-like 5; calcium-binding domain. Residues 332–357 (GNDNDEEEGEIEEEEEEELDEEDEEN) form a disordered region. Residues 333–367 (NDNDEEEGEIEEEEEEELDEEDEENVIEEEKLLRG) adopt a coiled-coil conformation. The span at 334 to 357 (DNDEEEGEIEEEEEEELDEEDEEN) shows a compositional bias: acidic residues. One can recognise an MAM domain in the interval 399–543 (VDCRFDQGTC…VFLSSGPCSD (145 aa)).

It belongs to the nephronectin family.

It localises to the secreted. The protein resides in the extracellular space. Its subcellular location is the extracellular matrix. The protein localises to the basement membrane. Functionally, may play a role in organ morphogenesis. Promotes matrix assembly. The polypeptide is Epidermal growth factor-like protein 6 (egfl6) (Xenopus laevis (African clawed frog)).